We begin with the raw amino-acid sequence, 223 residues long: Large ribosomal subunit protein uL3 (223 aa).

Belongs to the universal ribosomal protein uL3 family. As to quaternary structure, part of the 50S ribosomal subunit. Forms a cluster with proteins L14 and L19.

Its function is as follows. One of the primary rRNA binding proteins, it binds directly near the 3'-end of the 23S rRNA, where it nucleates assembly of the 50S subunit. The sequence is that of Large ribosomal subunit protein uL3 from Mycoplasma capricolum subsp. capricolum (strain California kid / ATCC 27343 / NCTC 10154).